The chain runs to 119 residues: C-C motif chemokine 24 (119 aa).

The signal sequence occupies residues methionine 1 to serine 26. 2 disulfides stabilise this stretch: cysteine 33–cysteine 58 and cysteine 34–cysteine 74. Residues asparagine 54 and asparagine 115 are each glycosylated (N-linked (GlcNAc...) asparagine). Positions proline 96–valine 119 are disordered. A compositionally biased stretch (basic residues) spans lysine 101–valine 119.

It belongs to the intercrine beta (chemokine CC) family. As to expression, highest expression in jejunum and spleen. Lower levels found in liver and lung. No expression detected in kidney, thymus, brain or testis.

It is found in the secreted. In terms of biological role, chemotactic for resting T-lymphocytes, and eosinophils. Has lower chemotactic activity for neutrophils but none for monocytes and activated lymphocytes. Is a strong suppressor of colony formation by a multipotential hematopoietic progenitor cell line. Binds to CCR3. The protein is C-C motif chemokine 24 of Mus musculus (Mouse).